A 56-amino-acid chain; its full sequence is Large ribosomal subunit protein bL32 (56 aa).

The disordered stretch occupies residues 1–37; sequence MAVQQNKKSRSRRDMRRSHDALTTAAISVDKASGEKH. Residues 7 to 16 are compositionally biased toward basic residues; that stretch reads KKSRSRRDMR.

The protein belongs to the bacterial ribosomal protein bL32 family.

In Pasteurella multocida (strain Pm70), this protein is Large ribosomal subunit protein bL32 (rpmF).